Consider the following 338-residue polypeptide: Nicotinate-nucleotide--dimethylbenzimidazole phosphoribosyltransferase (338 aa).

The Proton acceptor role is filled by glutamate 305.

Belongs to the CobT family. In terms of assembly, homodimer.

The catalysed reaction is 5,6-dimethylbenzimidazole + nicotinate beta-D-ribonucleotide = alpha-ribazole 5'-phosphate + nicotinate + H(+). The protein operates within nucleoside biosynthesis; alpha-ribazole biosynthesis; alpha-ribazole from 5,6-dimethylbenzimidazole: step 1/2. In terms of biological role, catalyzes the synthesis of alpha-ribazole-5'-phosphate from nicotinate mononucleotide (NAMN) and 5,6-dimethylbenzimidazole (DMB). This is Nicotinate-nucleotide--dimethylbenzimidazole phosphoribosyltransferase (cobU) from Sinorhizobium sp.